Here is a 351-residue protein sequence, read N- to C-terminus: Maleylacetate reductase (351 aa).

Belongs to the iron-containing alcohol dehydrogenase family. Homodimer.

It catalyses the reaction 3-oxoadipate + NAD(+) = maleylacetate + NADH + H(+). It functions in the pathway aromatic compound metabolism. Functionally, involved in the gamma-resorcylate (2,6-dihydroxybenzoate) catabolism. Catalyzes the reduction of maleylacetate to 3-oxoadipate. This Rhizobium sp. (strain MTP-10005) protein is Maleylacetate reductase.